Reading from the N-terminus, the 231-residue chain is DNA mismatch repair protein MutH (231 aa).

The protein belongs to the MutH family.

It localises to the cytoplasm. Sequence-specific endonuclease that cleaves unmethylated GATC sequences. It is involved in DNA mismatch repair. This chain is DNA mismatch repair protein MutH, found in Klebsiella pneumoniae (strain 342).